Here is a 205-residue protein sequence, read N- to C-terminus: Holliday junction branch migration complex subunit RuvA (205 aa).

A domain I region spans residues M1–P64. Positions S65–A143 are domain II. The interval K144–T153 is flexible linker. The segment at T153–R205 is domain III.

It belongs to the RuvA family. As to quaternary structure, homotetramer. Forms an RuvA(8)-RuvB(12)-Holliday junction (HJ) complex. HJ DNA is sandwiched between 2 RuvA tetramers; dsDNA enters through RuvA and exits via RuvB. An RuvB hexamer assembles on each DNA strand where it exits the tetramer. Each RuvB hexamer is contacted by two RuvA subunits (via domain III) on 2 adjacent RuvB subunits; this complex drives branch migration. In the full resolvosome a probable DNA-RuvA(4)-RuvB(12)-RuvC(2) complex forms which resolves the HJ.

Its subcellular location is the cytoplasm. In terms of biological role, the RuvA-RuvB-RuvC complex processes Holliday junction (HJ) DNA during genetic recombination and DNA repair, while the RuvA-RuvB complex plays an important role in the rescue of blocked DNA replication forks via replication fork reversal (RFR). RuvA specifically binds to HJ cruciform DNA, conferring on it an open structure. The RuvB hexamer acts as an ATP-dependent pump, pulling dsDNA into and through the RuvAB complex. HJ branch migration allows RuvC to scan DNA until it finds its consensus sequence, where it cleaves and resolves the cruciform DNA. This Beijerinckia indica subsp. indica (strain ATCC 9039 / DSM 1715 / NCIMB 8712) protein is Holliday junction branch migration complex subunit RuvA.